A 358-amino-acid chain; its full sequence is Peptide chain release factor 1 (358 aa).

Gln233 is modified (N5-methylglutamine).

Belongs to the prokaryotic/mitochondrial release factor family. In terms of processing, methylated by PrmC. Methylation increases the termination efficiency of RF1.

It localises to the cytoplasm. In terms of biological role, peptide chain release factor 1 directs the termination of translation in response to the peptide chain termination codons UAG and UAA. This is Peptide chain release factor 1 from Clostridium botulinum (strain Loch Maree / Type A3).